The primary structure comprises 44 residues: Protein PsbN (44 aa).

A helical membrane pass occupies residues 6–26 (FFFTFFLWFLLLSVTGYSVYV).

The protein belongs to the PsbN family.

The protein resides in the plastid. It is found in the chloroplast thylakoid membrane. May play a role in photosystem I and II biogenesis. The sequence is that of Protein PsbN from Chlamydomonas reinhardtii (Chlamydomonas smithii).